A 348-amino-acid chain; its full sequence is Lipooligosaccharide heptosyltransferase 2 (348 aa).

This sequence belongs to the glycosyltransferase 9 family.

It catalyses the reaction an L-alpha-D-Hep-(1-&gt;5)-[alpha-Kdo-(2-&gt;4)]-alpha-Kdo-(2-&gt;6)-lipid A + ADP-L-glycero-beta-D-manno-heptose = an L-alpha-D-Hep-(1-&gt;3)-L-alpha-D-Hep-(1-&gt;5)-[alpha-Kdo-(2-&gt;4)]-alpha-Kdo-(2-&gt;6)-lipid A + ADP + H(+). Its pathway is bacterial outer membrane biogenesis; LOS core biosynthesis. Functionally, glycosyltransferase involved in the biosynthesis of the core oligosaccharide region of lipooligosaccharide (LOS). Catalyzes the addition of a heptose unit to the heptosyl-Kdo2-lipid A module. This is Lipooligosaccharide heptosyltransferase 2 from Haemophilus ducreyi (strain 35000HP / ATCC 700724).